The chain runs to 212 residues: MKSKFIVIEGLEGAGKTSVIQQIITILHSNGIHNIISTRDPGGTPLAETIRDIIKKGMNGEYITDYTELLLLYAARTQLVAQVIKPALMSGTWVISDRYDLSSQAYQGGGRGIDIRLLQNLRDAALGKFYPDLTIYLDLPPSKCRARIRARGIPLDRIEMESLSFFQRTSIRYRELVANDSRIITIDAQQSIAELNATIRNNIERWLKSQQK.

An ATP-binding site is contributed by 10–17 (GLEGAGKT).

The protein belongs to the thymidylate kinase family.

The enzyme catalyses dTMP + ATP = dTDP + ADP. Its function is as follows. Phosphorylation of dTMP to form dTDP in both de novo and salvage pathways of dTTP synthesis. The protein is Thymidylate kinase of Baumannia cicadellinicola subsp. Homalodisca coagulata.